The chain runs to 428 residues: Ectonucleoside triphosphate diphosphohydrolase 5 (428 aa).

The N-terminal stretch at 1 to 24 (MTSSRLPVLLALVFSSLSPVLSHS) is a signal peptide. The active-site Proton acceptor is the glutamate 172. N-linked (GlcNAc...) asparagine glycosylation is present at asparagine 232. Cystine bridges form between cysteine 272–cysteine 303 and cysteine 363–cysteine 377.

It belongs to the GDA1/CD39 NTPase family. In terms of assembly, monomer; active form. Homodimer; disulfide-linked. Homodimers are enzymatically inactive. Ca(2+) is required as a cofactor. Requires Mg(2+) as cofactor.

The protein resides in the endoplasmic reticulum. Its subcellular location is the secreted. The catalysed reaction is a ribonucleoside 5'-diphosphate + H2O = a ribonucleoside 5'-phosphate + phosphate + H(+). It catalyses the reaction GDP + H2O = GMP + phosphate + H(+). It carries out the reaction UDP + H2O = UMP + phosphate + H(+). The enzyme catalyses IDP + H2O = IMP + phosphate + H(+). The catalysed reaction is CDP + H2O = CMP + phosphate + H(+). It catalyses the reaction ADP + H2O = AMP + phosphate + H(+). It functions in the pathway protein modification; protein glycosylation. Hydrolyzes nucleoside diphosphates with a preference for GDP, IDP and UDP compared to ADP and CDP. In the lumen of the endoplasmic reticulum, hydrolyzes UDP that acts as an end-product feedback inhibitor of the UDP-Glc:glycoprotein glucosyltransferases. UMP can be transported back by an UDP-sugar antiporter to the cytosol where it is consumed to regenerate UDP-glucose. Therefore, it positively regulates protein reglucosylation by clearing UDP from the ER lumen and by promoting the regeneration of UDP-glucose. Protein reglucosylation is essential to proper glycoprotein folding and quality control in the ER. In Gallus gallus (Chicken), this protein is Ectonucleoside triphosphate diphosphohydrolase 5 (ENTPD5).